The primary structure comprises 330 residues: Ketol-acid reductoisomerase (NADP(+)) (330 aa).

Residues 2-181 form the KARI N-terminal Rossmann domain; it reads AKVYYDNDVN…GATRAGVIET (180 aa). Residues 25-28, Arg48, Ser52, and 82-85 each bind NADP(+); these read YGSQ and DEVQ. Residue His107 is part of the active site. Position 133 (Gly133) interacts with NADP(+). The 146-residue stretch at 182–327 folds into the KARI C-terminal knotted domain; it reads TFKEETETDL…ADLRMMMPFI (146 aa). Mg(2+) contacts are provided by Asp190, Glu194, Glu226, and Glu230. Substrate is bound at residue Ser251.

The protein belongs to the ketol-acid reductoisomerase family. Mg(2+) serves as cofactor.

It carries out the reaction (2R)-2,3-dihydroxy-3-methylbutanoate + NADP(+) = (2S)-2-acetolactate + NADPH + H(+). It catalyses the reaction (2R,3R)-2,3-dihydroxy-3-methylpentanoate + NADP(+) = (S)-2-ethyl-2-hydroxy-3-oxobutanoate + NADPH + H(+). It participates in amino-acid biosynthesis; L-isoleucine biosynthesis; L-isoleucine from 2-oxobutanoate: step 2/4. Its pathway is amino-acid biosynthesis; L-valine biosynthesis; L-valine from pyruvate: step 2/4. In terms of biological role, involved in the biosynthesis of branched-chain amino acids (BCAA). Catalyzes an alkyl-migration followed by a ketol-acid reduction of (S)-2-acetolactate (S2AL) to yield (R)-2,3-dihydroxy-isovalerate. In the isomerase reaction, S2AL is rearranged via a Mg-dependent methyl migration to produce 3-hydroxy-3-methyl-2-ketobutyrate (HMKB). In the reductase reaction, this 2-ketoacid undergoes a metal-dependent reduction by NADPH to yield (R)-2,3-dihydroxy-isovalerate. In Macrococcus caseolyticus (strain JCSC5402) (Macrococcoides caseolyticum), this protein is Ketol-acid reductoisomerase (NADP(+)).